We begin with the raw amino-acid sequence, 286 residues long: MMKQKTIAKEFSVTGVGLHSGVDVSMTVKPADIDSGIVFRRADLTPVVDIKVTPSSIKEAIMCTLLTKDGDQNLSVSTIEHLMSAFAMFEVDNVLIEVNAPELPVMDGSSYEFTQLLKQVGIVEQNSARKGIKILKPVRVEHEDKFAEVLPSDTLKYEFKIHWDHPVIAATNDHIVFEYDLDEYIKMVSKARTFGFYEQLAYLHQNNLAKGASLDNAVGVTNEGVLNEGGLRYDDEFVRHKLLDAIGDFYVGGYILGHFNCFKSGHTLNNKLLHAVFADKDAWEYI.

H81, H240, and D244 together coordinate Zn(2+). H266 functions as the Proton donor in the catalytic mechanism.

Belongs to the LpxC family. It depends on Zn(2+) as a cofactor.

The catalysed reaction is a UDP-3-O-[(3R)-3-hydroxyacyl]-N-acetyl-alpha-D-glucosamine + H2O = a UDP-3-O-[(3R)-3-hydroxyacyl]-alpha-D-glucosamine + acetate. Its pathway is glycolipid biosynthesis; lipid IV(A) biosynthesis; lipid IV(A) from (3R)-3-hydroxytetradecanoyl-[acyl-carrier-protein] and UDP-N-acetyl-alpha-D-glucosamine: step 2/6. Its function is as follows. Catalyzes the hydrolysis of UDP-3-O-myristoyl-N-acetylglucosamine to form UDP-3-O-myristoylglucosamine and acetate, the committed step in lipid A biosynthesis. This is UDP-3-O-acyl-N-acetylglucosamine deacetylase from Francisella tularensis subsp. tularensis (strain FSC 198).